Consider the following 547-residue polypeptide: Putative cysteine ligase BshC (547 aa).

Positions Asn-462–His-484 form a coiled coil.

The protein belongs to the BshC family.

Functionally, involved in bacillithiol (BSH) biosynthesis. May catalyze the last step of the pathway, the addition of cysteine to glucosamine malate (GlcN-Mal) to generate BSH. This chain is Putative cysteine ligase BshC, found in Heliobacterium modesticaldum (strain ATCC 51547 / Ice1).